The sequence spans 133 residues: Interleukin-4 (133 aa).

A signal peptide spans 1–24; that stretch reads MGLTYQLIPALVCLLAFTSTFVHG. N-linked (GlcNAc...) asparagine glycans are attached at residues Asn28, Asn45, Asn62, Asn84, Asn96, and Asn102. Cystine bridges form between Cys48–Cys85 and Cys70–Cys113.

The protein belongs to the IL-4/IL-13 family.

It is found in the secreted. Participates in at least several B-cell activation processes as well as of other cell types. It is a costimulator of DNA-synthesis. It induces the expression of class II MHC molecules on resting B-cells. It enhances both secretion and cell surface expression of IgE and IgG1. It also regulates the expression of the low affinity Fc receptor for IgE (CD23) on both lymphocytes and monocytes. Positively regulates IL31RA expression in macrophages. Stimulates autophagy in dendritic cells by interfering with mTORC1 signaling and through the induction of RUFY4. This Felis catus (Cat) protein is Interleukin-4 (IL4).